We begin with the raw amino-acid sequence, 319 residues long: tRNA dimethylallyltransferase (319 aa).

10-17 is an ATP binding site; it reads GPTAVGKT. Substrate is bound at residue 12 to 17; the sequence is TAVGKT. The tract at residues 35–38 is interaction with substrate tRNA; the sequence is DSMQ.

The protein belongs to the IPP transferase family. Monomer. Requires Mg(2+) as cofactor.

It carries out the reaction adenosine(37) in tRNA + dimethylallyl diphosphate = N(6)-dimethylallyladenosine(37) in tRNA + diphosphate. In terms of biological role, catalyzes the transfer of a dimethylallyl group onto the adenine at position 37 in tRNAs that read codons beginning with uridine, leading to the formation of N6-(dimethylallyl)adenosine (i(6)A). The protein is tRNA dimethylallyltransferase of Symbiobacterium thermophilum (strain DSM 24528 / JCM 14929 / IAM 14863 / T).